A 154-amino-acid polypeptide reads, in one-letter code: Endoribonuclease YbeY (154 aa).

Zn(2+) contacts are provided by His-113, His-117, and His-123.

It belongs to the endoribonuclease YbeY family. Requires Zn(2+) as cofactor.

It localises to the cytoplasm. Functionally, single strand-specific metallo-endoribonuclease involved in late-stage 70S ribosome quality control and in maturation of the 3' terminus of the 16S rRNA. In Ehrlichia chaffeensis (strain ATCC CRL-10679 / Arkansas), this protein is Endoribonuclease YbeY.